The primary structure comprises 815 residues: Bifunctional aspartokinase/homoserine dehydrogenase (815 aa).

The aspartokinase stretch occupies residues 1-249 (MRVLKFGGTS…VPDARLLPTL (249 aa)). Residues 250–470 (SYREAMELSY…NNKKVVDMFL (221 aa)) form an interface region. ACT domains follow at residues 320 to 392 (VSGP…PIEV) and 401 to 478 (VVGD…GVGG). Positions 471-815 (VGVGGVGGEL…FADILRTLQH (345 aa)) are homoserine dehydrogenase. Valine 473, glycine 475, valine 476, alanine 504, and threonine 555 together coordinate NAD(+). Valine 476 is a binding site for NADP(+). Valine 476 contributes to the NADPH binding site. Threonine 555 contributes to the NADP(+) binding site. NADPH is bound by residues threonine 555, serine 556, and lysine 579. Lysine 579 provides a ligand contact to NADP(+). Na(+)-binding residues include glutamate 606, valine 609, alanine 611, and leucine 613. NADP(+) contacts are provided by glycine 664 and glutamate 667. L-homoserine is bound by residues glutamate 667 and aspartate 678. Lysine 682 (proton donor) is an active-site residue. Position 797 (glycine 797) interacts with NAD(+). Residue glycine 797 participates in NADP(+) binding. Glycine 797 serves as a coordination point for NADPH.

The protein in the N-terminal section; belongs to the aspartokinase family. This sequence in the C-terminal section; belongs to the homoserine dehydrogenase family. As to quaternary structure, homotetramer. Requires a metal cation as cofactor.

The enzyme catalyses L-homoserine + NADP(+) = L-aspartate 4-semialdehyde + NADPH + H(+). It carries out the reaction L-homoserine + NAD(+) = L-aspartate 4-semialdehyde + NADH + H(+). The catalysed reaction is L-aspartate + ATP = 4-phospho-L-aspartate + ADP. The protein operates within amino-acid biosynthesis; L-lysine biosynthesis via DAP pathway; (S)-tetrahydrodipicolinate from L-aspartate: step 1/4. Its pathway is amino-acid biosynthesis; L-methionine biosynthesis via de novo pathway; L-homoserine from L-aspartate: step 1/3. It participates in amino-acid biosynthesis; L-methionine biosynthesis via de novo pathway; L-homoserine from L-aspartate: step 3/3. It functions in the pathway amino-acid biosynthesis; L-threonine biosynthesis; L-threonine from L-aspartate: step 1/5. The protein operates within amino-acid biosynthesis; L-threonine biosynthesis; L-threonine from L-aspartate: step 3/5. Functionally, bifunctional aspartate kinase and homoserine dehydrogenase that catalyzes the first and the third steps toward the synthesis of lysine, methionine and threonine from aspartate. This is Bifunctional aspartokinase/homoserine dehydrogenase (thrA) from Haemophilus influenzae (strain ATCC 51907 / DSM 11121 / KW20 / Rd).